Consider the following 25-residue polypeptide: SPbeta prophage-derived uncharacterized protein YotF (25 aa).

The chain is SPbeta prophage-derived uncharacterized protein YotF (yotF) from Bacillus subtilis (strain 168).